Here is a 183-residue protein sequence, read N- to C-terminus: UPF0397 protein PBPRA2239 (183 aa).

Transmembrane regions (helical) follow at residues 8–28 (VVLI…MFGI), 41–61 (AVLA…VGFI), 69–89 (FAGW…GLII), 110–130 (FALF…CSAY), and 147–167 (LIII…YILT).

The protein belongs to the UPF0397 family.

Its subcellular location is the cell membrane. The sequence is that of UPF0397 protein PBPRA2239 from Photobacterium profundum (strain SS9).